A 304-amino-acid polypeptide reads, in one-letter code: 2-phospho-L-lactate transferase (304 aa).

Position 49 (aspartate 49) interacts with 7,8-didemethyl-8-hydroxy-5-deazariboflavin.

Belongs to the CofD family. As to quaternary structure, homodimer. Mg(2+) is required as a cofactor.

It carries out the reaction (2S)-lactyl-2-diphospho-5'-guanosine + 7,8-didemethyl-8-hydroxy-5-deazariboflavin = oxidized coenzyme F420-0 + GMP + H(+). Its pathway is cofactor biosynthesis; coenzyme F420 biosynthesis. Functionally, catalyzes the transfer of the 2-phospholactate moiety from (2S)-lactyl-2-diphospho-5'-guanosine to 7,8-didemethyl-8-hydroxy-5-deazariboflavin (FO) with the formation of oxidized coenzyme F420-0 and GMP. In Methanocorpusculum labreanum (strain ATCC 43576 / DSM 4855 / Z), this protein is 2-phospho-L-lactate transferase.